Reading from the N-terminus, the 221-residue chain is ATP-dependent dethiobiotin synthetase BioD (221 aa).

Residue 13-18 (DIGKTY) coordinates ATP. Thr-17 is a binding site for Mg(2+). Lys-38 is an active-site residue. Residue Ser-42 coordinates substrate. ATP-binding positions include Asp-51, 112–115 (EGSG), and 176–177 (NR). Mg(2+) contacts are provided by Asp-51 and Glu-112.

The protein belongs to the dethiobiotin synthetase family. As to quaternary structure, homodimer. The cofactor is Mg(2+).

It localises to the cytoplasm. It catalyses the reaction (7R,8S)-7,8-diammoniononanoate + CO2 + ATP = (4R,5S)-dethiobiotin + ADP + phosphate + 3 H(+). It participates in cofactor biosynthesis; biotin biosynthesis; biotin from 7,8-diaminononanoate: step 1/2. Catalyzes a mechanistically unusual reaction, the ATP-dependent insertion of CO2 between the N7 and N8 nitrogen atoms of 7,8-diaminopelargonic acid (DAPA, also called 7,8-diammoniononanoate) to form a ureido ring. The chain is ATP-dependent dethiobiotin synthetase BioD from Brachyspira hyodysenteriae (strain ATCC 49526 / WA1).